The sequence spans 194 residues: uncharacterized protein (194 aa).

Positions 2–62 (QGPRERMVVS…CEAVDYAGEH (61 aa)) constitute an HTH tetR-type domain. A DNA-binding region (H-T-H motif) is located at residues 25–44 (AISDVLQHSGAPRGSAYHYF).

This is an uncharacterized protein from Mycobacterium tuberculosis (strain CDC 1551 / Oshkosh).